The sequence spans 395 residues: E3 ubiquitin-protein ligase RNFT1 (395 aa).

2 disordered regions span residues 1–58 (MQAS…SSRN) and 78–97 (YSHS…GEHG). The next 6 membrane-spanning stretches (helical) occupy residues 118–138 (ILIL…LGIG), 165–185 (CAWL…TFHS), 193–213 (IFLN…IVGI), 216–236 (FILK…PSFI), 258–278 (IFVP…FGNV), and 283–303 (LGIL…FGHL). The tract at residues 328 to 379 (CSDMDGICTICQAEFQKPVLLFCQHIFCEECITLWFNREKTCPLCRTVISEC) is required for ubiquitin ligase activity and for protection against ER stress-induced cell death. The RING-type zinc finger occupies 335–373 (CTICQAEFQKPVLLFCQHIFCEECITLWFNREKTCPLCR).

Predominantly expressed in testis.

The protein resides in the early endosome membrane. The enzyme catalyses S-ubiquitinyl-[E2 ubiquitin-conjugating enzyme]-L-cysteine + [acceptor protein]-L-lysine = [E2 ubiquitin-conjugating enzyme]-L-cysteine + N(6)-ubiquitinyl-[acceptor protein]-L-lysine.. The protein operates within protein modification; protein ubiquitination. E3 ubiquitin-protein ligase that acts in the endoplasmic reticulum (ER)-associated degradation (ERAD) pathway, which targets misfolded proteins that accumulate in the endoplasmic reticulum (ER) for ubiquitination and subsequent proteasome-mediated degradation. Protects cells from ER stress-induced apoptosis. This is E3 ubiquitin-protein ligase RNFT1 (Rnft1) from Mus musculus (Mouse).